The primary structure comprises 446 residues: uncharacterized protein (446 aa).

Phosphoserine occurs at positions 393 and 397. The disordered stretch occupies residues 411-431 (LSSTERRDLDRVRDKQKKQDQ).

The protein belongs to the IFRD family.

Its subcellular location is the cytoplasm. This is an uncharacterized protein from Schizosaccharomyces pombe (strain 972 / ATCC 24843) (Fission yeast).